The following is a 743-amino-acid chain: Glycerol dehydrogenase large subunit (743 aa).

A signal peptide spans 1 to 24 (MRRSHLLATVACATLACAPLAANA). Over residues 27-41 (APAGSGGSPTSSVPG) the composition is skewed to low complexity. Disordered stretches follow at residues 27–115 (APAG…GHDD) and 445–474 (ILPV…STGM).

It belongs to the bacterial PQQ dehydrogenase family. Pyrroloquinoline quinone is required as a cofactor.

The protein localises to the secreted. It carries out the reaction glycerol + A = dihydroxyacetone + AH2. In terms of biological role, catalyzes the oxidation of glycerol to glycerone. Also acts, more slowly, on a number of other polyols including D-sorbitol, D-arabinitol, D-mannitol, meso-erythritol, adonitol and propylene glycol. In Gluconobacter oxydans (strain 621H) (Gluconobacter suboxydans), this protein is Glycerol dehydrogenase large subunit (sldA).